The following is a 100-amino-acid chain: Aspartyl/glutamyl-tRNA(Asn/Gln) amidotransferase subunit C (100 aa).

This sequence belongs to the GatC family. As to quaternary structure, heterotrimer of A, B and C subunits.

The enzyme catalyses L-glutamyl-tRNA(Gln) + L-glutamine + ATP + H2O = L-glutaminyl-tRNA(Gln) + L-glutamate + ADP + phosphate + H(+). It carries out the reaction L-aspartyl-tRNA(Asn) + L-glutamine + ATP + H2O = L-asparaginyl-tRNA(Asn) + L-glutamate + ADP + phosphate + 2 H(+). In terms of biological role, allows the formation of correctly charged Asn-tRNA(Asn) or Gln-tRNA(Gln) through the transamidation of misacylated Asp-tRNA(Asn) or Glu-tRNA(Gln) in organisms which lack either or both of asparaginyl-tRNA or glutaminyl-tRNA synthetases. The reaction takes place in the presence of glutamine and ATP through an activated phospho-Asp-tRNA(Asn) or phospho-Glu-tRNA(Gln). This chain is Aspartyl/glutamyl-tRNA(Asn/Gln) amidotransferase subunit C, found in Streptococcus thermophilus (strain ATCC BAA-491 / LMD-9).